Consider the following 1199-residue polypeptide: Nucleolar protein 6 (1199 aa).

Residues 1–10 (MLRNKRKAGK) show a composition bias toward basic residues. 2 disordered regions span residues 1 to 51 (MLRN…EPKP) and 1146 to 1199 (KREQ…KALK). Basic and acidic residues-rich tracts occupy residues 28–37 (HAEDHSDLEH) and 1146–1169 (KREQ…EKST).

This sequence belongs to the NRAP family. In terms of assembly, part of the small subunit (SSU) processome, composed of more than 70 proteins and the RNA chaperone small nucleolar RNA (snoRNA) U3.

It is found in the nucleus. Its subcellular location is the nucleolus. The protein resides in the chromosome. Functionally, part of the small subunit (SSU) processome, first precursor of the small eukaryotic ribosomal subunit. During the assembly of the SSU processome in the nucleolus, many ribosome biogenesis factors, an RNA chaperone and ribosomal proteins associate with the nascent pre-rRNA and work in concert to generate RNA folding, modifications, rearrangements and cleavage as well as targeted degradation of pre-ribosomal RNA by the RNA exosome. The protein is Nucleolar protein 6 of Drosophila yakuba (Fruit fly).